Consider the following 461-residue polypeptide: ERBB receptor feedback inhibitor 1 (461 aa).

An N-acetylserine modification is found at serine 2. Phosphothreonine occurs at positions 126 and 130. A disordered region spans residues 228–353 (QNRVVPDPNP…VMPPTQSFAP (126 aa)). Serine 251 and serine 272 each carry phosphoserine. The segment covering 265 to 274 (SSCTHRASPS) has biased composition (polar residues). The segment covering 283–292 (PPRVPIPPRP) has biased composition (pro residues). Serine 301 bears the Phosphoserine mark. The segment covering 311–324 (DEDRPPKVPPREPL) has biased composition (basic and acidic residues). The span at 325-336 (SRSNSRTPSPKS) shows a compositional bias: polar residues. The segment at 333-362 (SPKSLPSYLNGVMPPTQSFAPDPKYVSSKA) is interaction with EGFR and ERBB2 and regulation of EGFR activation. The residue at position 460 (serine 460) is a Phosphoserine.

It belongs to the MIG6 family. As to quaternary structure, interacts with EGFR. Interacts with ERBB2. Detected in lung, in airway epithelial cells and alveolar type 2 cells (at protein level). Detected in uterus stroma, luminal epithelium and glandular epithelium.

The protein localises to the cytoplasm. It localises to the cell membrane. Its subcellular location is the nucleus. Functionally, negative regulator of EGFR signaling in skin morphogenesis. Acts as a negative regulator for several EGFR family members, including ERBB2, ERBB3 and ERBB4. Inhibits EGFR catalytic activity by interfering with its dimerization. Inhibits autophosphorylation of EGFR, ERBB2 and ERBB4. Important for normal keratinocyte proliferation and differentiation. Plays a role in modulating the response to steroid hormones in the uterus. Required for normal response to progesterone in the uterus and for fertility. Mediates epithelial estrogen responses in the uterus by regulating ESR1 levels and activation. Important for regulation of endometrium cell proliferation. Important for normal prenatal and perinatal lung development. The polypeptide is ERBB receptor feedback inhibitor 1 (Errfi1) (Mus musculus (Mouse)).